The chain runs to 56 residues: Conotoxin reg3.9 (56 aa).

Positions 1–8 (LLFPLSAL) are cleaved as a signal peptide. Positions 1 to 22 (LLFPLSALPLDGDQPADQPAER) are disordered. A propeptide spanning residues 9–40 (PLDGDQPADQPAERMQDISPEQNFWFDLVERG) is cleaved from the precursor. Intrachain disulfides connect cysteine 41–cysteine 55, cysteine 42–cysteine 53, and cysteine 47–cysteine 56.

Belongs to the conotoxin M superfamily. As to expression, expressed by the venom duct.

It is found in the secreted. In Conus regius (Crown cone), this protein is Conotoxin reg3.9.